Here is a 185-residue protein sequence, read N- to C-terminus: Iron-sulfur assembly protein 2 (185 aa).

3 residues coordinate Fe cation: Cys-89, Cys-175, and Cys-177.

This sequence belongs to the HesB/IscA family.

The protein resides in the mitochondrion matrix. In terms of biological role, involved in the assembly of mitochondrial and cytoplasmic iron-sulfur proteins. Probably involved in the binding of an intermediate of Fe/S cluster assembly. The polypeptide is Iron-sulfur assembly protein 2 (ISA2) (Saccharomyces cerevisiae (strain ATCC 204508 / S288c) (Baker's yeast)).